A 379-amino-acid polypeptide reads, in one-letter code: Sulfate adenylyltransferase (379 aa).

Belongs to the sulfate adenylyltransferase family.

The enzyme catalyses sulfate + ATP + H(+) = adenosine 5'-phosphosulfate + diphosphate. It participates in sulfur metabolism; hydrogen sulfide biosynthesis; sulfite from sulfate: step 1/3. The protein is Sulfate adenylyltransferase of Cenarchaeum symbiosum (strain A).